The primary structure comprises 267 residues: Hydroxyethylthiazole kinase 2 (267 aa).

Methionine 41 contributes to the substrate binding site. Residues lysine 116 and threonine 166 each coordinate ATP. Position 193 (glycine 193) interacts with substrate.

The protein belongs to the Thz kinase family. Mg(2+) is required as a cofactor.

The catalysed reaction is 5-(2-hydroxyethyl)-4-methylthiazole + ATP = 4-methyl-5-(2-phosphooxyethyl)-thiazole + ADP + H(+). The protein operates within cofactor biosynthesis; thiamine diphosphate biosynthesis; 4-methyl-5-(2-phosphoethyl)-thiazole from 5-(2-hydroxyethyl)-4-methylthiazole: step 1/1. Its function is as follows. Catalyzes the phosphorylation of the hydroxyl group of 4-methyl-5-beta-hydroxyethylthiazole (THZ). In Streptococcus pneumoniae (strain P1031), this protein is Hydroxyethylthiazole kinase 2.